The following is an 817-amino-acid chain: Phospholipase D alpha 2 (817 aa).

Residues 1 to 130 (MAHLLLHGTL…LSGEAIERRL (130 aa)) form the C2 domain. Aspartate 192 contacts Ca(2+). The region spanning 333–372 (YMITHHQKTVIVDHDMPVPRGGGSRRIVSFVGGLDLCDGR) is the PLD phosphodiesterase 1 domain. Active-site residues include histidine 338, lysine 340, and aspartate 345. Residue histidine 338 coordinates a 1,2-diacyl-sn-glycero-3-phosphate. The Ca(2+) site is built by histidine 378 and histidine 412. Residues glutamine 529 and histidine 668 each coordinate a 1,2-diacyl-sn-glycero-3-phosphate. Residues 663 to 690 (FMIYVHSKMMIVDDEYIIVGSANINQRS) form the PLD phosphodiesterase 2 domain. Active-site residues include histidine 668, lysine 670, and aspartate 675. Glutamate 730 contributes to the Ca(2+) binding site.

This sequence belongs to the phospholipase D family. C2-PLD subfamily. Requires Ca(2+) as cofactor.

The enzyme catalyses a 1,2-diacyl-sn-glycero-3-phosphocholine + H2O = a 1,2-diacyl-sn-glycero-3-phosphate + choline + H(+). In terms of biological role, hydrolyzes glycerol-phospholipids at the terminal phosphodiesteric bond. Plays an important role in various cellular processes. This Oryza sativa subsp. japonica (Rice) protein is Phospholipase D alpha 2 (PLD2).